Here is a 186-residue protein sequence, read N- to C-terminus: Sec-independent protein translocase protein TatB (186 aa).

The chain crosses the membrane as a helical span at residues 1–21 (MFDIGFSELILLMVLGLVVLG). Residues 120-186 (NAEKSQNAIS…SKSQSSKTKS (67 aa)) are disordered. Polar residues predominate over residues 177–186 (SKSQSSKTKS).

Belongs to the TatB family. The Tat system comprises two distinct complexes: a TatABC complex, containing multiple copies of TatA, TatB and TatC subunits, and a separate TatA complex, containing only TatA subunits. Substrates initially bind to the TatABC complex, which probably triggers association of the separate TatA complex to form the active translocon.

It localises to the cell inner membrane. Its function is as follows. Part of the twin-arginine translocation (Tat) system that transports large folded proteins containing a characteristic twin-arginine motif in their signal peptide across membranes. Together with TatC, TatB is part of a receptor directly interacting with Tat signal peptides. TatB may form an oligomeric binding site that transiently accommodates folded Tat precursor proteins before their translocation. The chain is Sec-independent protein translocase protein TatB from Haemophilus influenzae (strain ATCC 51907 / DSM 11121 / KW20 / Rd).